Reading from the N-terminus, the 303-residue chain is Probable serine acetyltransferase 1 (303 aa).

Disordered stretches follow at residues 1–36 (MTAGQPLRDDPQPRRHSPPALHPAVVPAYPPPESDA) and 271–290 (NPARLLGGKKGDDMPGESMD).

This sequence belongs to the transferase hexapeptide repeat family. In terms of assembly, homomultimer.

It carries out the reaction L-serine + acetyl-CoA = O-acetyl-L-serine + CoA. Its pathway is amino-acid biosynthesis; L-cysteine biosynthesis; L-cysteine from L-serine: step 1/2. In Oryza sativa subsp. japonica (Rice), this protein is Probable serine acetyltransferase 1 (SAT1).